Here is a 2947-residue protein sequence, read N- to C-terminus: 3'-5' exoribonuclease HELZ2 (2947 aa).

Residues 85–114 (PMRYQVCHYYRPGLGCRRHWNRCTFARSPE) form a C3H1-type 1 zinc finger. The C2H2-type zinc finger occupies 167–187 (CFTCCPPCLCPVDPRGHCPKH). The C3H1-type 2 zinc finger occupies 221-245 (YCMYVGRGVPCRHGASRCEYAHSAV). The segment at 289–311 (CHACLVTCNSQEAFENHCSSLEH) adopts a C2H2-type; atypical zinc-finger fold. Residues 769–1317 (VGLIAGRRPE…ELLDESQQVT (549 aa)) enclose the UvrD-like helicase ATP-binding domain. Residue 790–797 (GPFGTGKT) participates in ATP binding. The interaction with THRAP3 stretch occupies residues 809 to 1290 (QQPHTKVLIC…GGMSEEDSES (482 aa)). Positions 913-916 (DEAA) match the DEAA box motif. The tract at residues 1260–1292 (EDTASGNSASRDAAAEVSTLEGGMSEEDSESDF) is disordered. 4 short sequence motifs (LXXLL motif) span residues 1306 to 1310 (LKELL), 1348 to 1352 (LWKFL), 1403 to 1407 (LVQIL), and 2240 to 2244 (LEGLP). The residue at position 2381 (Arg2381) is an Omega-N-methylarginine. The segment at 2413–2947 (PEPCRGNWPR…RVQRKSALSS (535 aa)) is interaction with THRAP3. A UvrD-like helicase ATP-binding 2 domain is found at 2449 to 2726 (LNQSQDRAVR…IMLDTQYRMH (278 aa)). Residue 2470–2477 (GPPGTGKT) participates in ATP binding. Residues 2525–2529 (LGGLL) carry the LXXLL motif 5 motif.

Belongs to the DNA2/NAM7 helicase family. Interacts with PPARA (via DNA-binding domain) and PPARG; the interaction stimulates the transcriptional activity of PPARA and PPARG. Interacts with THRAP3; the interaction is direct and HELZ2 and THRAP3 synergistically enhance the transcriptional activity of PPARG. It is probably part of the peroxisome proliferator activated receptor alpha interacting complex (PRIC).

Its subcellular location is the cytoplasm. The catalysed reaction is Exonucleolytic cleavage in the 3'- to 5'-direction to yield nucleoside 5'-phosphates.. It catalyses the reaction ATP + H2O = ADP + phosphate + H(+). Can degrade highly structured RNAs through its concerted ATP-dependent RNA helicase and 3' to 5' exoribonuclease activities. Shows a strong preference for pyrimidine over purine residues for its nuclease activity. Acts as a transcriptional coactivator for a number of nuclear receptors including PPARA, PPARG, THRA, THRB and RXRA. This Mus musculus (Mouse) protein is 3'-5' exoribonuclease HELZ2 (Helz2).